The primary structure comprises 196 residues: HTH-type transcriptional regulator BetI (196 aa).

The HTH tetR-type domain maps to 8-68 (PVRREQLIRA…AAMRQILREL (61 aa)). The segment at residues 31–50 (TVATIAKKAGLSSGIVAHYF) is a DNA-binding region (H-T-H motif).

It participates in amine and polyamine biosynthesis; betaine biosynthesis via choline pathway [regulation]. Its function is as follows. Repressor involved in the biosynthesis of the osmoprotectant glycine betaine. It represses transcription of the choline transporter BetT and the genes of BetAB involved in the synthesis of glycine betaine. This chain is HTH-type transcriptional regulator BetI, found in Stenotrophomonas maltophilia (strain R551-3).